A 146-amino-acid polypeptide reads, in one-letter code: Snaclec 4 (146 aa).

Residues Met1–Ala23 form the signal peptide. 3 cysteine pairs are disulfide-bonded: Cys27-Cys38, Cys55-Cys144, and Cys121-Cys136. Residues Tyr34–Lys145 form the C-type lectin domain.

It belongs to the snaclec family. As to quaternary structure, heterodimer; disulfide-linked.

The protein localises to the secreted. Interferes with one step of hemostasis (modulation of platelet aggregation, or coagulation cascade, for example). The chain is Snaclec 4 from Daboia siamensis (Eastern Russel's viper).